The primary structure comprises 223 residues: ATP-dependent dethiobiotin synthetase BioD (223 aa).

Threonine 16 contacts Mg(2+). Lysine 37 is a catalytic residue. Serine 41 serves as a coordination point for substrate. Residues aspartate 50 and glutamate 111 each contribute to the Mg(2+) site. Residues aspartate 50, glutamate 111–glycine 114, and asparagine 171–arginine 172 contribute to the ATP site.

It belongs to the dethiobiotin synthetase family. Homodimer. Requires Mg(2+) as cofactor.

The protein resides in the cytoplasm. The enzyme catalyses (7R,8S)-7,8-diammoniononanoate + CO2 + ATP = (4R,5S)-dethiobiotin + ADP + phosphate + 3 H(+). It functions in the pathway cofactor biosynthesis; biotin biosynthesis; biotin from 7,8-diaminononanoate: step 1/2. In terms of biological role, catalyzes a mechanistically unusual reaction, the ATP-dependent insertion of CO2 between the N7 and N8 nitrogen atoms of 7,8-diaminopelargonic acid (DAPA, also called 7,8-diammoniononanoate) to form a ureido ring. The chain is ATP-dependent dethiobiotin synthetase BioD from Anaeromyxobacter dehalogenans (strain 2CP-C).